We begin with the raw amino-acid sequence, 80 residues long: Nuclear protein 1 (80 aa).

The interval 40 to 80 (GGRKGRTKREAAANTNRPSPGGHERKLLTKFQNSERKKAWR) is disordered. Positions 61-80 (GHERKLLTKFQNSERKKAWR) are enriched in basic and acidic residues. The short motif at 64 to 80 (RKLLTKFQNSERKKAWR) is the Nuclear localization signal element.

Belongs to the NUPR family. In terms of assembly, monomer. Directly interacts with MSL1 and binds MORF4L1, two components of histone acetyltransferase complex; the interaction with MORF4L1 may be mediated by MSL1. Interacts with EP300; this interaction enhances the effect of EP300 on PAX2 transcription factor activity. Interacts with PAXIP1; this interaction prevents PAXIP1 inhibition of PAX2 transcription factor activity. Interacts with COPS5; this interaction allows COPS5-dependent CDKN1B nuclear to cytoplasm translocation. Interacts with RNF2. Interacts with FOXO3; this interaction represses FOXO3 transactivation. Interacts with PTMA; regulates apoptotic process. Interacts with MYOD1, EP300 and DDX5; this interaction coordinates the association of anti-proliferative and pro-myogenic proteins at the myogenin promoter. Interacts with TP53; interaction is stress-dependent. Forms a complex with EP300 and TP53; this complex binds CDKN1A promoter leading to transcriptional induction of CDKN1A. In terms of processing, phosphorylated. Phosphorylation promotes DNA-binding activity. Post-translationally, acetylated. Strongly activated in pancreatic acinar cells during the acute phase of pancreatitis, in developing pancreas and during pancreatic regeneration.

The protein localises to the nucleus. Its subcellular location is the cytoplasm. It localises to the perinuclear region. In terms of biological role, transcription regulator that converts stress signals into a program of gene expression that empowers cells with resistance to the stress induced by a change in their microenvironment. Thereby participates in the regulation of many processes namely cell-cycle, apoptosis, autophagy and DNA repair responses. Controls cell cycle progression and protects cells from genotoxic stress induced by doxorubicin through the complex formation with TP53 and EP300 that binds CDKN1A promoter leading to transcriptional induction of CDKN1A. Protects pancreatic cancer cells from stress-induced cell death by binding the RELB promoter and activating its transcription, leading to IER3 transactivation. Negatively regulates apoptosis through interaction with PTMA. Inhibits autophagy-induced apoptosis in cardiac cells through FOXO3 interaction, inducing cytoplasmic translocation of FOXO3 thereby preventing the FOXO3 association with the pro-autophagic BNIP3 promoter. Inhibits cell growth and facilitates programmed cell death by apoptosis after adriamycin-induced DNA damage through transactivation of TP53. Regulates methamphetamine-induced apoptosis and autophagy through DDIT3-mediated endoplasmic reticulum stress pathway. Participates in DNA repair following gamma-irradiation by facilitating DNA access of the transcription machinery through interaction with MSL1 leading to inhibition of histone H4' Lys-16' acetylation (H4K16ac). Coactivator of PAX2 transcription factor activity, both by recruiting the EP300 cofactor to increase PAX2 transcription factor activity and by binding PAXIP1 to suppress PAXIP1-induced inhibition on PAX2. Positively regulates cell cycle progression through interaction with COPS5 inducing cytoplasmic translocation of CDKN1B leading to the CDKN1B degradation. Coordinates, through its interaction with EP300, the assiociation of MYOD1, EP300 and DDX5 to the MYOG promoter, leading to inhibition of cell-cycle progression and myogenic differentiation promotion. Negatively regulates beta cell proliferation via inhibition of cell-cycle regulatory genes expression through the suppression of their promoter activities. Also required for LHB expression and ovarian maturation. Exacerbates CNS inflammation and demyelination upon cuprizone treatment. The protein is Nuclear protein 1 of Rattus norvegicus (Rat).